The sequence spans 67 residues: Neurotoxin Cex9 (67 aa).

The 65-residue stretch at 1–65 folds into the LCN-type CS-alpha/beta domain; the sequence is KDGYPVEVTG…TWPLPNKSCG (65 aa). Disulfide bonds link cysteine 11-cysteine 64, cysteine 15-cysteine 40, cysteine 24-cysteine 45, and cysteine 28-cysteine 47. The residue at position 64 (cysteine 64) is a Cysteine amide. The propeptide occupies 65 to 67; sequence GKK.

Belongs to the long (4 C-C) scorpion toxin superfamily. Sodium channel inhibitor family. Beta subfamily. As to expression, expressed by the venom gland.

It is found in the secreted. In terms of biological role, beta toxins bind voltage-independently at site-4 of sodium channels (Nav) and shift the voltage of activation toward more negative potentials thereby affecting sodium channel activation and promoting spontaneous and repetitive firing. The polypeptide is Neurotoxin Cex9 (Centruroides exilicauda (Bark scorpion)).